We begin with the raw amino-acid sequence, 286 residues long: CBY1-interacting BAR domain-containing protein 1 (286 aa).

A mitochondrion-targeting transit peptide spans Met-1 to Lys-47. The segment at Asp-10–Val-220 is BAR-like. A coiled-coil region spans residues Lys-107–Lys-178. Residues Gly-258 to Asn-286 form a disordered region. A compositionally biased stretch (acidic residues) spans Val-271–Asn-286.

It belongs to the CIBAR family. As to quaternary structure, homodimer (via BAR-like domain). Heterodimer with FAM92B (via BAR-like domains). Interacts (via BAR-like domain) with CBY1; this interaction is required for targeting FAM92A to centriole and cilium basal body. Interacts (via BAR-like domain) with CBY3; both proteins form a ninefold symmetric structure at the flagellar base; are recruited to the annulus in a mutually dependent manner and regulate annulus positionning. Expressed in the heart, liver, spleen, lung, kidney, brain and muscle (at protein level). Strongly expressed throughout the developing limb bud, including the progress zone and the apical ectodermal ridge.

It is found in the cytoplasm. It localises to the cytoskeleton. Its subcellular location is the microtubule organizing center. The protein resides in the centrosome. The protein localises to the centriole. It is found in the cilium basal body. It localises to the cell projection. Its subcellular location is the cilium. The protein resides in the nucleus. The protein localises to the mitochondrion inner membrane. It is found in the flagellum. Its function is as follows. Plays a critical role in regulating mitochondrial ultrastructure and function by maintaining the integrity of mitochondrial morphology, particularly the organization of cristae. Preferentially binds to negatively charged phospholipids like cardiolipin and phosphatidylinositol 4,5-bisphosphate enhancing its interaction with mitochondrial membranes. Induces membrane curvature and tubulation, which are critical for maintaining mitochondrial ultrastructure and the organization of cristae. Plays a crucial role in ciliogenesis. May play a role in limb development through its role in ciliogenesis. Plays a key role in the correct positioning of the annulus, a septin-based ring structure in the sperm flagellum, serving both as a physical barrier and a membrane diffusion barrier that separates the midpiece (MP) from the principal piece (PP). This positioning is essential for proper sperm motility and function. Interacts with CBY3 to form a complex which localizes to the curved membrane region of the flagellar pocket. By doing so, may provide stability and rigidity to the periannular membrane to prevent membrane deformation. This function is crucial for halting annulus migration at the proximal end of the fibrous sheath-containing PP. The sequence is that of CBY1-interacting BAR domain-containing protein 1 from Mus musculus (Mouse).